The following is a 266-amino-acid chain: MAIMQINFYSKMLKKNTTILAILPVDKPDKKFQKDVDSENLKTLYLLHGYAGNYMDWLCGARIVELSMRYNVAVFLPSGENSFYLDDEEKEEYFGEFVGNEIIEFTRSVFPIPQKREKTFIGGLSMGGYGALRNGLKYNKNFVGIIALSSALIIHKIAGIPKDYRNAYASYNYYRRVFGDLNSLIGSDKDINALVTKLKQEKGSIPKIYMACGRDDFLVQENRDLFNFLKNEGIDVVYEEDEGGHDWDFWNKYIANAFEWMSKVSD.

The sequence is that of Acetyl esterase (xynC) from Caldicellulosiruptor saccharolyticus (Caldocellum saccharolyticum).